Here is a 240-residue protein sequence, read N- to C-terminus: Uridylate kinase (240 aa).

An ATP-binding site is contributed by Lys-12–Gly-15. Residues Gly-20–Gly-25 form an involved in allosteric activation by GTP region. Gly-54 contacts UMP. The ATP site is built by Gly-55 and Arg-59. Residues Asp-74 and Thr-135–Thr-142 each bind UMP. ATP-binding residues include Tyr-168 and Asp-171.

This sequence belongs to the UMP kinase family. Homohexamer.

The protein resides in the cytoplasm. It carries out the reaction UMP + ATP = UDP + ADP. Its pathway is pyrimidine metabolism; CTP biosynthesis via de novo pathway; UDP from UMP (UMPK route): step 1/1. Its activity is regulated as follows. Allosterically activated by GTP. Inhibited by UTP. Its function is as follows. Catalyzes the reversible phosphorylation of UMP to UDP. This is Uridylate kinase from Desulfitobacterium hafniense (strain Y51).